A 338-amino-acid chain; its full sequence is DNA-directed RNA polymerase subunit alpha (338 aa).

Residues 1-225 (MLISQRPTIT…ELFGLARELN (225 aa)) are alpha N-terminal domain (alpha-NTD). Positions 240-338 (TEYIAAYSMP…YIDVEAEDSE (99 aa)) are alpha C-terminal domain (alpha-CTD). The interval 319 to 338 (LEGYDAETGGYIDVEAEDSE) is disordered.

It belongs to the RNA polymerase alpha chain family. In terms of assembly, homodimer. The RNAP catalytic core consists of 2 alpha, 1 beta, 1 beta' and 1 omega subunit. When a sigma factor is associated with the core the holoenzyme is formed, which can initiate transcription.

The enzyme catalyses RNA(n) + a ribonucleoside 5'-triphosphate = RNA(n+1) + diphosphate. Functionally, DNA-dependent RNA polymerase catalyzes the transcription of DNA into RNA using the four ribonucleoside triphosphates as substrates. The sequence is that of DNA-directed RNA polymerase subunit alpha from Corynebacterium glutamicum (strain R).